A 294-amino-acid polypeptide reads, in one-letter code: Nucleotide-binding protein NT01CX_1284 (294 aa).

An ATP-binding site is contributed by 8–15; it reads GLSGAGKS. 59–62 contacts GTP; the sequence is DIRG.

It belongs to the RapZ-like family.

Functionally, displays ATPase and GTPase activities. The sequence is that of Nucleotide-binding protein NT01CX_1284 from Clostridium novyi (strain NT).